The chain runs to 479 residues: Transcriptional regulator ERG (479 aa).

A compositionally biased stretch (polar residues) spans 34–47; that stretch reads TASSSSDYGQTSKM. Disordered regions lie at residues 34-56 and 72-92; these read TASS…QQDW and PSQV…KGGK. Residues S48, S81, and S96 each carry the phosphoserine modification. Positions 113-199 constitute a PNT domain; it reads MPPPNMTTNE…SHLHYLRETP (87 aa). The interval 242 to 293 is disordered; it reads QRITTRPDLPYEPPRRSAWTGHGHPTPQSKAAQPSPSTVPKTEDQRPQLDPY. Positions 267–281 are enriched in polar residues; it reads TPQSKAAQPSPSTVP. K282 participates in a covalent cross-link: Glycyl lysine isopeptide (Lys-Gly) (interchain with G-Cter in SUMO2). The ETS DNA-binding region spans 311–391; the sequence is IQLWQFLLEL…HGKRYAYKFD (81 aa).

The protein belongs to the ETS family. Identified in a IGF2BP1-dependent mRNP granule complex containing untranslated mRNAs. Interacts with SETDB1.

It localises to the nucleus. The protein localises to the cytoplasm. In terms of biological role, transcriptional regulator. May participate in transcriptional regulation through the recruitment of SETDB1 histone methyltransferase and subsequent modification of local chromatin structure. This chain is Transcriptional regulator ERG (ERG), found in Homo sapiens (Human).